The following is a 369-amino-acid chain: Putative agmatine deiminase (369 aa).

The Amidino-cysteine intermediate role is filled by cysteine 361.

It belongs to the agmatine deiminase family.

It carries out the reaction agmatine + H2O = N-carbamoylputrescine + NH4(+). The sequence is that of Putative agmatine deiminase from Streptococcus mutans serotype c (strain ATCC 700610 / UA159).